A 246-amino-acid polypeptide reads, in one-letter code: Acetoacetate decarboxylase (246 aa).

Lys-116 (schiff-base intermediate with acetoacetate) is an active-site residue.

Belongs to the ADC family.

The catalysed reaction is acetoacetate + H(+) = acetone + CO2. In terms of biological role, catalyzes the conversion of acetoacetate to acetone and carbon dioxide. This is Acetoacetate decarboxylase from Burkholderia vietnamiensis (strain G4 / LMG 22486) (Burkholderia cepacia (strain R1808)).